The primary structure comprises 296 residues: uncharacterized protein (296 aa).

10 consecutive transmembrane segments (helical) span residues 8 to 28, 34 to 54, 63 to 83, 89 to 109, 121 to 141, 147 to 167, 183 to 203, 208 to 228, 238 to 258, and 261 to 281; these read LFVL…ALAP, LAFG…AVWI, WAWP…PLFF, TGIA…AGTL, SWWI…SDSS, VAGV…TLIS, VFMI…ISWI, GLGT…FLFA, AAVT…VFFI, and MLSP…LVIS. 2 consecutive EamA domains span residues 15–138 and 158–282; these read FFWG…LLFS and ASFA…VISA.

The protein belongs to the EamA transporter family.

The protein localises to the cell membrane. This is an uncharacterized protein from Bacillus subtilis (strain 168).